Reading from the N-terminus, the 402-residue chain is Probable tRNA pseudouridine synthase D (402 aa).

Aspartate 94 serves as the catalytic Nucleophile. The TRUD domain maps to 175-364; that stretch reads YILNYYGTQR…PGTRRKLITK (190 aa).

It belongs to the pseudouridine synthase TruD family.

The enzyme catalyses uridine(13) in tRNA = pseudouridine(13) in tRNA. Could be responsible for synthesis of pseudouridine from uracil-13 in transfer RNAs. The polypeptide is Probable tRNA pseudouridine synthase D (Methanococcus aeolicus (strain ATCC BAA-1280 / DSM 17508 / OCM 812 / Nankai-3)).